Here is a 246-residue protein sequence, read N- to C-terminus: Protein PHLOEM PROTEIN 2-LIKE A1 (246 aa).

In terms of tissue distribution, vascular tissues, specifically in phloem companion cell-sieve element complexes.

The polypeptide is Protein PHLOEM PROTEIN 2-LIKE A1 (PP2A1) (Arabidopsis thaliana (Mouse-ear cress)).